The following is a 212-amino-acid chain: Large ribosomal subunit protein uL3 (212 aa).

A disordered region spans residues 130–155 (KRGNMTHGSKNHRLPGSTGAGTTPGR).

The protein belongs to the universal ribosomal protein uL3 family. In terms of assembly, part of the 50S ribosomal subunit. Forms a cluster with proteins L14 and L19.

One of the primary rRNA binding proteins, it binds directly near the 3'-end of the 23S rRNA, where it nucleates assembly of the 50S subunit. The chain is Large ribosomal subunit protein uL3 from Rippkaea orientalis (strain PCC 8801 / RF-1) (Cyanothece sp. (strain PCC 8801)).